Reading from the N-terminus, the 375-residue chain is CD2 homolog (375 aa).

The N-terminal stretch at 1-16 (MIIILIFLIIPNIVLS) is a signal peptide. Topologically, residues 17 to 207 (IDYWVSFNKT…YLDFFQVASY (191 aa)) are extracellular. N-linked (GlcNAc...) asparagine; by host glycans are attached at residues N24, N80, N105, N122, N134, N145, N168, N176, and N183. 2 disulfide bridges follow: C123-C190 and C130-C173. A helical membrane pass occupies residues 208-228 (MFYMIIFIATGIIASIFISII). At 229 to 375 (TFLSLRKRKK…ISLIHVDRII (147 aa)) the chain is on the cytoplasmic side. Residues 242 to 278 (EIESPSPSESNEEEQCQHDDTTSIHEPSPREPLLPKP) are disordered. Over residues 256-270 (QCQHDDTTSIHEPSP) the composition is skewed to basic and acidic residues. A run of 5 repeats spans residues 305 to 310 (KLCPPP), 311 to 316 (KPCPPP), 317 to 322 (KPCPPP), 323 to 328 (KPCPPP), and 329 to 334 (KPCPSS). Residues 305–334 (KLCPPPKPCPPPKPCPPPKPCPPPKPCPSS) are 5 X 6 AA tandem repeats of K-[LP]-C-[PRS]-[PS]-[PS]. The segment at 323 to 350 (KPCPPPKPCPSSESCSPPESYSLPKPLP) is disordered. Over residues 332 to 346 (PSSESCSPPESYSLP) the composition is skewed to low complexity.

Belongs to the asfivirus CD2 homolog protein family. As to quaternary structure, both glycosylated and nonglycosylated forms interact (via C-terminus) with the host AP-1 complex. Cleaved into two fragments of 63 kDa and 26 kDa containing respectively the glycosylated N-terminus and the nonglycosylated C-terminus. A full-length 89-kDa glycosylated form also exists.

The protein resides in the host membrane. It localises to the virion membrane. Its subcellular location is the host Golgi apparatus. In terms of biological role, may play an immunosuppressive role by inhibiting lymphocyte proliferation and subsequently facilitating viral replication and generalization of infection. Responsible for viral hemadsorption, which may help viral spread. Increases virus replication in the tick vector at the step of virus uptake or replication in the tick gut. May play a role in the host Golgi reorganization to yield viral factories. May play a role in host cell penetration. This Ornithodoros (relapsing fever ticks) protein is CD2 homolog.